A 555-amino-acid polypeptide reads, in one-letter code: MKSDIQIARDIELQRIEQIAESIDLPVEQLEPYGRYTAKVPLSCIDEEKVKKGNLILVTAITPNKAGVGKTTVSIGLALGLNHIGKKAIVALREPSLGPCFGMKGGAAGGGYAQVLPMENINLHFTGDFHAVTSAHNMITALLENYIYQNRNTCDGLSEILWKRVLDVNDRSLRNAVTGLGTISDGIPRQTGFDITPASEIMAILCLAKDFEDLRSRLENILLGYTKEGAPFTVKDLGIAGSIAVLLKDAIKPNLVQTTEHTPAFVHGGPFANIAHGCNSILATKMALSFGEYAVTEAGFGADLGAEKFLDIKCREMGVAPKLTVLVATLRALKLHGGVAETEIKAPNAEALRRGLSNLDRHIYNLKKFGQQVIVAFNRFDTDEEEEISIVREHCIGQNVGFAVNNAFAEGGKGAEELAKLVVEMVENKPSQPLKYAYEPENPVKMKIEKIAKEIYSAGSVVYSSKADGKLKKIAMQSLDHLPVCIAKTQYSFSSDPKAKGDVRGFELKVSDIIINRGAGMLVVIIGEIMRMPGLPKEPQAVHIDIVDGFIEGLS.

Belongs to the formate--tetrahydrofolate ligase family.

The catalysed reaction is (6S)-5,6,7,8-tetrahydrofolate + formate + ATP = (6R)-10-formyltetrahydrofolate + ADP + phosphate. It functions in the pathway one-carbon metabolism; tetrahydrofolate interconversion. The polypeptide is Formate--tetrahydrofolate ligase (Porphyromonas gingivalis (strain ATCC BAA-308 / W83)).